The following is a 328-amino-acid chain: Glycerol-3-phosphate dehydrogenase [NAD(P)+] (328 aa).

NADPH-binding residues include W15, H35, Y51, and K107. Residues K107, G135, and S137 each contribute to the sn-glycerol 3-phosphate site. A139 contacts NADPH. Residues K190, D243, S253, R254, and N255 each coordinate sn-glycerol 3-phosphate. Residue K190 is the Proton acceptor of the active site. R254 lines the NADPH pocket. NADPH contacts are provided by L276 and E278.

This sequence belongs to the NAD-dependent glycerol-3-phosphate dehydrogenase family.

Its subcellular location is the cytoplasm. It carries out the reaction sn-glycerol 3-phosphate + NAD(+) = dihydroxyacetone phosphate + NADH + H(+). It catalyses the reaction sn-glycerol 3-phosphate + NADP(+) = dihydroxyacetone phosphate + NADPH + H(+). The protein operates within membrane lipid metabolism; glycerophospholipid metabolism. Catalyzes the reduction of the glycolytic intermediate dihydroxyacetone phosphate (DHAP) to sn-glycerol 3-phosphate (G3P), the key precursor for phospholipid synthesis. The polypeptide is Glycerol-3-phosphate dehydrogenase [NAD(P)+] (Rhodopseudomonas palustris (strain BisA53)).